We begin with the raw amino-acid sequence, 162 residues long: G/U mismatch-specific DNA glycosylase (162 aa).

This sequence belongs to the uracil-DNA glycosylase (UDG) superfamily. TDG/mug family. In terms of assembly, binds DNA as a monomer.

Its subcellular location is the cytoplasm. It catalyses the reaction Specifically hydrolyzes mismatched double-stranded DNA and polynucleotides, releasing free uracil.. In terms of biological role, excises ethenocytosine and uracil, which can arise by alkylation or deamination of cytosine, respectively, from the corresponding mispairs with guanine in ds-DNA. It is capable of hydrolyzing the carbon-nitrogen bond between the sugar-phosphate backbone of the DNA and the mispaired base. The complementary strand guanine functions in substrate recognition. Required for DNA damage lesion repair in stationary-phase cells. This is G/U mismatch-specific DNA glycosylase from Serratia marcescens.